A 101-amino-acid polypeptide reads, in one-letter code: MAKKSKIAKNEQRRAIVERYAERRAELKEIIRSPASSPEQRVAAQSELNRQPRDASAVRLRNRDAVDGRPRGYLRKFGLSRVRVRELVHDGSLPGVRKASW.

The interval I31–R59 is disordered.

This sequence belongs to the universal ribosomal protein uS14 family. As to quaternary structure, part of the 30S ribosomal subunit. Contacts proteins S3 and S10.

Functionally, binds 16S rRNA, required for the assembly of 30S particles and may also be responsible for determining the conformation of the 16S rRNA at the A site. The sequence is that of Small ribosomal subunit protein uS14A from Mycobacteroides abscessus (strain ATCC 19977 / DSM 44196 / CCUG 20993 / CIP 104536 / JCM 13569 / NCTC 13031 / TMC 1543 / L948) (Mycobacterium abscessus).